Reading from the N-terminus, the 754-residue chain is uncharacterized protein (754 aa).

The disordered stretch occupies residues 1–110; the sequence is MNKGQNQVVP…RNMLGSLQKT (110 aa). The segment covering 15–25 has biased composition (polar residues); that stretch reads FGGQNPPQLSS. Low complexity predominate over residues 26–35; sequence IPPIVNPVVV. Over residues 36-46 the composition is skewed to polar residues; that stretch reads QNRTSPGTPFI. The segment covering 49-60 has biased composition (basic and acidic residues); that stretch reads KAKEIYNRRQQE. The segment covering 62–72 has biased composition (acidic residues); it reads ISSDSEEEESP. Positions 76-93 are enriched in basic and acidic residues; it reads AKSKYSRDSRDSRDTRDS.

The protein localises to the virion. This is an uncharacterized protein from Acanthamoeba polyphaga mimivirus (APMV).